The chain runs to 165 residues: 6,7-dimethyl-8-ribityllumazine synthase (165 aa).

Residues phenylalanine 24, 62–64, and 86–88 each bind 5-amino-6-(D-ribitylamino)uracil; these read AFE and AVI. 91–92 is a (2S)-2-hydroxy-3-oxobutyl phosphate binding site; that stretch reads DT. The Proton donor role is filled by histidine 94. Phenylalanine 119 provides a ligand contact to 5-amino-6-(D-ribitylamino)uracil. Arginine 133 lines the (2S)-2-hydroxy-3-oxobutyl phosphate pocket.

It belongs to the DMRL synthase family.

The enzyme catalyses (2S)-2-hydroxy-3-oxobutyl phosphate + 5-amino-6-(D-ribitylamino)uracil = 6,7-dimethyl-8-(1-D-ribityl)lumazine + phosphate + 2 H2O + H(+). Its pathway is cofactor biosynthesis; riboflavin biosynthesis; riboflavin from 2-hydroxy-3-oxobutyl phosphate and 5-amino-6-(D-ribitylamino)uracil: step 1/2. In terms of biological role, catalyzes the formation of 6,7-dimethyl-8-ribityllumazine by condensation of 5-amino-6-(D-ribitylamino)uracil with 3,4-dihydroxy-2-butanone 4-phosphate. This is the penultimate step in the biosynthesis of riboflavin. This chain is 6,7-dimethyl-8-ribityllumazine synthase, found in Prochlorococcus marinus (strain MIT 9313).